A 553-amino-acid chain; its full sequence is Hydroxylamine reductase (553 aa).

Cys-3, Cys-6, Cys-15, and Cys-21 together coordinate [4Fe-4S] cluster. Residues His-244, Glu-268, Cys-312, Cys-406, Cys-434, Cys-459, Glu-494, and Lys-496 each contribute to the hybrid [4Fe-2O-2S] cluster site. At Cys-406 the chain carries Cysteine persulfide.

Belongs to the HCP family. In terms of assembly, monomer. It depends on [4Fe-4S] cluster as a cofactor. The cofactor is hybrid [4Fe-2O-2S] cluster.

Its subcellular location is the cytoplasm. It catalyses the reaction A + NH4(+) + H2O = hydroxylamine + AH2 + H(+). Its function is as follows. Catalyzes the reduction of hydroxylamine to form NH(3) and H(2)O. The chain is Hydroxylamine reductase from Nitratidesulfovibrio vulgaris (strain ATCC 29579 / DSM 644 / CCUG 34227 / NCIMB 8303 / VKM B-1760 / Hildenborough) (Desulfovibrio vulgaris).